The chain runs to 466 residues: IQ domain-containing protein C (466 aa).

Positions 6 to 35 (LVRKVSALQACVRGFLVRRQFQSLRAEYEA) constitute an IQ domain. Disordered regions lie at residues 105–157 (KSGE…PHSQ), 214–233 (EQACERDQSQPSAPLEDQSY), 238–310 (TGEL…QTFG), and 394–466 (VLDL…EPPG). The span at 132–153 (PSQEKTRDTTRMENPEATDQRL) shows a compositional bias: basic and acidic residues. Over residues 282 to 293 (GPPSSIPSNSQA) the composition is skewed to polar residues. The segment covering 297 to 306 (RLTKGPDDGR) has biased composition (basic and acidic residues). Residue serine 438 is modified to Phosphoserine.

The sequence is that of IQ domain-containing protein C (IQCC) from Homo sapiens (Human).